We begin with the raw amino-acid sequence, 917 residues long: Glutamate receptor (917 aa).

The signal sequence occupies residues 1-19; sequence MDTCVFPLVVLWISMRITS. The Extracellular segment spans residues 20–556; it reads TLDEVPIGGI…HFFSFMEPLS (537 aa). N-linked (GlcNAc...) asparagine glycosylation is found at Asn-62, Asn-95, Asn-121, Asn-125, Asn-229, Asn-251, Asn-261, Asn-272, Asn-418, Asn-419, Asn-424, and Asn-491. The chain crosses the membrane as a helical span at residues 557–577; the sequence is SEIWMCIVFAYIGVSVVLFLV. The Cytoplasmic segment spans residues 578 to 631; it reads SRFSPNEWHLSEAHHSYIANDFSISNSLWFSLGAFMQQGCDISPRSMSGRIVGS. Residues 632-652 form a helical membrane-spanning segment; sequence VWWFFTLIIISSYTANLAAFL. Over 653–818 the chain is Extracellular; the sequence is TVERMLTPID…GAQSALTLAN (166 aa). N-linked (GlcNAc...) asparagine glycosylation occurs at Asn-775. Residues 819 to 839 traverse the membrane as a helical segment; sequence VAGIFYILIGGLVVAVLSAAF. Residues 840-917 lie on the Cytoplasmic side of the membrane; it reads EFLYKSRMDS…FEDSNTHTEV (78 aa). The interval 871-896 is disordered; the sequence is HIDSEQKTTGNGTRRRSHNSVTYTYT.

It belongs to the glutamate-gated ion channel (TC 1.A.10.1) family.

It is found in the cell membrane. It localises to the postsynaptic cell membrane. Functionally, receptor for glutamate. L-glutamate acts as an excitatory neurotransmitter at many synapses in the central nervous system. The postsynaptic actions of Glu are mediated by a variety of receptors. This is Glutamate receptor from Lymnaea stagnalis (Great pond snail).